The chain runs to 123 residues: MIQPQTLLNVADNSGARKLMCIRVIGAAGNQRYARIGDVIVAVIKDALPQMPLERSEVIRAVIVRTCKEFKCEDGIIIRYDDNAAVIIDQKGNPKGTRVFGAIAEELRELNFTKIVSLAPEVL.

Belongs to the universal ribosomal protein uL14 family. Part of the 50S ribosomal subunit.

It is found in the plastid. Its subcellular location is the chloroplast. Binds to 23S rRNA. The polypeptide is Large ribosomal subunit protein uL14c (Lolium perenne (Perennial ryegrass)).